Consider the following 89-residue polypeptide: Small ribosomal subunit protein uS15 (89 aa).

It belongs to the universal ribosomal protein uS15 family. As to quaternary structure, part of the 30S ribosomal subunit. Forms a bridge to the 50S subunit in the 70S ribosome, contacting the 23S rRNA.

One of the primary rRNA binding proteins, it binds directly to 16S rRNA where it helps nucleate assembly of the platform of the 30S subunit by binding and bridging several RNA helices of the 16S rRNA. Its function is as follows. Forms an intersubunit bridge (bridge B4) with the 23S rRNA of the 50S subunit in the ribosome. This is Small ribosomal subunit protein uS15 from Phocaeicola vulgatus (strain ATCC 8482 / DSM 1447 / JCM 5826 / CCUG 4940 / NBRC 14291 / NCTC 11154) (Bacteroides vulgatus).